The sequence spans 258 residues: Imidazole glycerol phosphate synthase subunit HisF (258 aa).

Active-site residues include D11 and D130.

This sequence belongs to the HisA/HisF family. As to quaternary structure, heterodimer of HisH and HisF.

The protein resides in the cytoplasm. It catalyses the reaction 5-[(5-phospho-1-deoxy-D-ribulos-1-ylimino)methylamino]-1-(5-phospho-beta-D-ribosyl)imidazole-4-carboxamide + L-glutamine = D-erythro-1-(imidazol-4-yl)glycerol 3-phosphate + 5-amino-1-(5-phospho-beta-D-ribosyl)imidazole-4-carboxamide + L-glutamate + H(+). It functions in the pathway amino-acid biosynthesis; L-histidine biosynthesis; L-histidine from 5-phospho-alpha-D-ribose 1-diphosphate: step 5/9. IGPS catalyzes the conversion of PRFAR and glutamine to IGP, AICAR and glutamate. The HisF subunit catalyzes the cyclization activity that produces IGP and AICAR from PRFAR using the ammonia provided by the HisH subunit. The polypeptide is Imidazole glycerol phosphate synthase subunit HisF (Klebsiella pneumoniae (strain 342)).